The sequence spans 142 residues: UPF0102 protein Synpcc7942_0312 (142 aa).

The protein belongs to the UPF0102 family.

This is UPF0102 protein Synpcc7942_0312 from Synechococcus elongatus (strain ATCC 33912 / PCC 7942 / FACHB-805) (Anacystis nidulans R2).